We begin with the raw amino-acid sequence, 585 residues long: SCF E3 ubiquitin ligase complex F-box protein grrA (585 aa).

Over residues 1 to 10 the composition is skewed to polar residues; sequence MARSRQPTRF. Disordered regions lie at residues 1–34 and 41–60; these read MARSRQPTRFSSEAPSESSSSTSPERAADDDTDF and DSQSSIGAGNPRDSHIQNDP. The span at 11–25 shows a compositional bias: low complexity; it reads SSEAPSESSSSTSPE. The 49-residue stretch at 65-113 folds into the F-box domain; it reads PPIAYLPPEILISIFSKLSSPRDLLSCLLVCRIWALNCVGLLWHRPSCN. LRR repeat units follow at residues 147–171, 172–197, 198–223, 224–249, 250–275, 276–301, 302–329, 330–355, 356–381, 382–407, 408–432, 433–465, and 466–491; these read TEDVSDGTVVPFSQCNRIERLTLTN, CRKLTDIGVSDLVVGSRHLQALDVSE, LRSLTDHTLFKVAENCNRLQGLNITG, CVKVTDDSLIAVSQNCRLLKRLKLNG, VSQVTDKAILSFAQNCPSILEIDLQE, CKLVTNQSVTALMTTLQNLRELRLAH, CTEIDDSAFLDLPRHIQMTSLRILDLTA, CENIRDEAVERIVSSAPRLRNLVLAK, CKFITDRAVWAICKLGKNLHYVHLGH, CSNINDSAVIQLVKSCNRIRYIDLAC, CSRLTDRSVQQLATLPKLRRIGLVK, CQLITDASILALARPAQDHSVPCSSLERVHLSY, and CVNLTMVGIHALLNSCPRLTHLSLTG.

Part of a SCF E3 ubiquitin ligase complex. In terms of tissue distribution, specifically expressed in ascus mother cells.

The protein resides in the cytoplasm. In terms of biological role, involved in meiosis and required for ascospore formation. Involved in substrate recognition in ubiquitin-dependent degradation. The sequence is that of SCF E3 ubiquitin ligase complex F-box protein grrA (grrA) from Emericella nidulans (strain FGSC A4 / ATCC 38163 / CBS 112.46 / NRRL 194 / M139) (Aspergillus nidulans).